The sequence spans 241 residues: 1-(5-phosphoribosyl)-5-[(5-phosphoribosylamino)methylideneamino] imidazole-4-carboxamide isomerase (241 aa).

The active-site Proton acceptor is Asp12. Asp133 functions as the Proton donor in the catalytic mechanism.

This sequence belongs to the HisA/HisF family.

The protein localises to the cytoplasm. The enzyme catalyses 1-(5-phospho-beta-D-ribosyl)-5-[(5-phospho-beta-D-ribosylamino)methylideneamino]imidazole-4-carboxamide = 5-[(5-phospho-1-deoxy-D-ribulos-1-ylimino)methylamino]-1-(5-phospho-beta-D-ribosyl)imidazole-4-carboxamide. It participates in amino-acid biosynthesis; L-histidine biosynthesis; L-histidine from 5-phospho-alpha-D-ribose 1-diphosphate: step 4/9. This is 1-(5-phosphoribosyl)-5-[(5-phosphoribosylamino)methylideneamino] imidazole-4-carboxamide isomerase from Persephonella marina (strain DSM 14350 / EX-H1).